A 305-amino-acid polypeptide reads, in one-letter code: Ankyrin repeat domain-containing protein 23 (305 aa).

A coiled-coil region spans residues Gln-41–Leu-72. Over residues Lys-83 to Pro-92 the composition is skewed to basic residues. The interval Lys-83–Gln-104 is disordered. ANK repeat units follow at residues Leu-143–Ala-172, Leu-176–Ala-205, Ile-209–Ala-238, and Glu-242–Val-271. Positions Arg-178–Gln-195 are interaction with TTN.

As to quaternary structure, interacts with titin/TTN and MYPN. Mainly expressed in heart, skeletal muscle and brown adipose tissues.

Its subcellular location is the nucleus. Functionally, may be involved in the energy metabolism. Could be a molecular link between myofibrillar stretch-induced signaling pathways and muscle gene expression. This is Ankyrin repeat domain-containing protein 23 (ANKRD23) from Homo sapiens (Human).